The primary structure comprises 360 residues: Photosystem II protein D1 (360 aa).

The next 3 membrane-spanning stretches (helical) occupy residues Y29–S46, H118–L133, and W142–A156. Residue H118 coordinates chlorophyll a. A pheophytin a-binding site is contributed by Y126. [CaMn4O5] cluster-binding residues include D170 and E189. The chain crosses the membrane as a helical span at residues F197–L218. H198 serves as a coordination point for chlorophyll a. A quinone contacts are provided by residues H215 and S264 to F265. Residue H215 participates in Fe cation binding. H272 provides a ligand contact to Fe cation. Residues F274–M288 form a helical membrane-spanning segment. [CaMn4O5] cluster-binding residues include H332, E333, D342, and A344. Positions S345–A360 are excised as a propeptide.

Belongs to the reaction center PufL/M/PsbA/D family. As to quaternary structure, PSII is composed of 1 copy each of membrane proteins PsbA, PsbB, PsbC, PsbD, PsbE, PsbF, PsbH, PsbI, PsbJ, PsbK, PsbL, PsbM, PsbT, PsbX, PsbY, PsbZ, Psb30/Ycf12, at least 3 peripheral proteins of the oxygen-evolving complex and a large number of cofactors. It forms dimeric complexes. It depends on The D1/D2 heterodimer binds P680, chlorophylls that are the primary electron donor of PSII, and subsequent electron acceptors. It shares a non-heme iron and each subunit binds pheophytin, quinone, additional chlorophylls, carotenoids and lipids. D1 provides most of the ligands for the Mn4-Ca-O5 cluster of the oxygen-evolving complex (OEC). There is also a Cl(-1) ion associated with D1 and D2, which is required for oxygen evolution. The PSII complex binds additional chlorophylls, carotenoids and specific lipids. as a cofactor. Tyr-161 forms a radical intermediate that is referred to as redox-active TyrZ, YZ or Y-Z. Post-translationally, C-terminally processed by CTPA; processing is essential to allow assembly of the oxygen-evolving complex and thus photosynthetic growth.

It is found in the plastid. Its subcellular location is the chloroplast thylakoid membrane. It carries out the reaction 2 a plastoquinone + 4 hnu + 2 H2O = 2 a plastoquinol + O2. In terms of biological role, photosystem II (PSII) is a light-driven water:plastoquinone oxidoreductase that uses light energy to abstract electrons from H(2)O, generating O(2) and a proton gradient subsequently used for ATP formation. It consists of a core antenna complex that captures photons, and an electron transfer chain that converts photonic excitation into a charge separation. The D1/D2 (PsbA/PsbD) reaction center heterodimer binds P680, the primary electron donor of PSII as well as several subsequent electron acceptors. The polypeptide is Photosystem II protein D1 (Thalassiosira pseudonana (Marine diatom)).